We begin with the raw amino-acid sequence, 1166 residues long: ATP-dependent helicase/deoxyribonuclease subunit B (1166 aa).

The 285-residue stretch at 1-285 (MGAVFLSGRS…VRLEETKRHR (285 aa)) folds into the UvrD-like helicase ATP-binding domain. Position 8-15 (8-15 (GRSGSGKT)) interacts with ATP. Positions 279–586 (EETKRHRHHP…KFALIPPALD (308 aa)) constitute a UvrD-like helicase C-terminal domain. [4Fe-4S] cluster contacts are provided by C801, C1121, C1124, and C1130.

This sequence belongs to the helicase family. AddB/RexB type 1 subfamily. As to quaternary structure, heterodimer of AddA and AddB. The cofactor is Mg(2+). It depends on [4Fe-4S] cluster as a cofactor.

In terms of biological role, the heterodimer acts as both an ATP-dependent DNA helicase and an ATP-dependent, dual-direction single-stranded exonuclease. Recognizes the chi site generating a DNA molecule suitable for the initiation of homologous recombination. The AddB subunit has 5' -&gt; 3' nuclease activity but not helicase activity. The chain is ATP-dependent helicase/deoxyribonuclease subunit B from Bacillus licheniformis (strain ATCC 14580 / DSM 13 / JCM 2505 / CCUG 7422 / NBRC 12200 / NCIMB 9375 / NCTC 10341 / NRRL NRS-1264 / Gibson 46).